We begin with the raw amino-acid sequence, 132 residues long: ATP synthase epsilon chain (132 aa).

It belongs to the ATPase epsilon chain family. As to quaternary structure, F-type ATPases have 2 components, CF(1) - the catalytic core - and CF(0) - the membrane proton channel. CF(1) has five subunits: alpha(3), beta(3), gamma(1), delta(1), epsilon(1). CF(0) has three main subunits: a, b and c.

The protein localises to the cell membrane. Its function is as follows. Produces ATP from ADP in the presence of a proton gradient across the membrane. The polypeptide is ATP synthase epsilon chain (Clostridium kluyveri (strain NBRC 12016)).